Here is a 207-residue protein sequence, read N- to C-terminus: ATP-dependent Clp protease proteolytic subunit (207 aa).

S111 serves as the catalytic Nucleophile. Residue H136 is part of the active site.

This sequence belongs to the peptidase S14 family. In terms of assembly, fourteen ClpP subunits assemble into 2 heptameric rings which stack back to back to give a disk-like structure with a central cavity, resembling the structure of eukaryotic proteasomes.

It localises to the cytoplasm. The catalysed reaction is Hydrolysis of proteins to small peptides in the presence of ATP and magnesium. alpha-casein is the usual test substrate. In the absence of ATP, only oligopeptides shorter than five residues are hydrolyzed (such as succinyl-Leu-Tyr-|-NHMec, and Leu-Tyr-Leu-|-Tyr-Trp, in which cleavage of the -Tyr-|-Leu- and -Tyr-|-Trp bonds also occurs).. Functionally, cleaves peptides in various proteins in a process that requires ATP hydrolysis. Has a chymotrypsin-like activity. Plays a major role in the degradation of misfolded proteins. The chain is ATP-dependent Clp protease proteolytic subunit from Yersinia pseudotuberculosis serotype O:1b (strain IP 31758).